Reading from the N-terminus, the 79-residue chain is uncharacterized protein (79 aa).

Residues 4–43 (QENEDLRKQLVEASELLKSQAKELKDAHQQQKLALQDFLE) adopt a coiled-coil conformation.

This is an uncharacterized protein from Homo sapiens (Human).